Consider the following 357-residue polypeptide: Glycerol-3-phosphate dehydrogenase [NAD(P)+] (357 aa).

4 residues coordinate NADPH: Ser12, Trp13, His33, and Lys115. Lys115, Gly149, and Ser151 together coordinate sn-glycerol 3-phosphate. Gly153 contributes to the NADPH binding site. Residues Lys204, Asp263, Arg274, and Asn275 each contribute to the sn-glycerol 3-phosphate site. Catalysis depends on Lys204, which acts as the Proton acceptor. Position 274 (Arg274) interacts with NADPH. Leu307 and Glu309 together coordinate NADPH.

This sequence belongs to the NAD-dependent glycerol-3-phosphate dehydrogenase family.

It is found in the cytoplasm. It carries out the reaction sn-glycerol 3-phosphate + NAD(+) = dihydroxyacetone phosphate + NADH + H(+). The enzyme catalyses sn-glycerol 3-phosphate + NADP(+) = dihydroxyacetone phosphate + NADPH + H(+). It functions in the pathway membrane lipid metabolism; glycerophospholipid metabolism. Catalyzes the reduction of the glycolytic intermediate dihydroxyacetone phosphate (DHAP) to sn-glycerol 3-phosphate (G3P), the key precursor for phospholipid synthesis. The chain is Glycerol-3-phosphate dehydrogenase [NAD(P)+] from Treponema denticola (strain ATCC 35405 / DSM 14222 / CIP 103919 / JCM 8153 / KCTC 15104).